We begin with the raw amino-acid sequence, 503 residues long: 11-hydroxysugiol 20-monooxygenase (503 aa).

Residues Q2–S22 form a helical membrane-spanning segment. C446 contacts heme.

The protein belongs to the cytochrome P450 family. Heme serves as cofactor. Highly expressed in roots.

Its subcellular location is the membrane. The catalysed reaction is 11-hydroxysugiol + reduced [NADPH--hemoprotein reductase] + O2 = 11,20-dihydroxysugiol + oxidized [NADPH--hemoprotein reductase] + H2O + H(+). The enzyme catalyses 11-hydroxyferruginol + reduced [NADPH--hemoprotein reductase] + O2 = 11,20-dihydroxyferruginol + oxidized [NADPH--hemoprotein reductase] + H2O + H(+). The protein operates within secondary metabolite biosynthesis; terpenoid biosynthesis. Its function is as follows. Monooxygenase that oxidizes 11-hydroxysugiol to produce 11,20-dihydroxysugiol. Can oxidize 11-hydroxyferruginol to produce 11,20-dihydroxyferruginol. These products are intermediates in tanshinone biosynthesis. In Salvia miltiorrhiza (Chinese sage), this protein is 11-hydroxysugiol 20-monooxygenase.